The following is a 240-amino-acid chain: MRMAFMLLALLFSFRNASIQAEDARLLQPKTNALDLVVQGVDLVLFAQDKTAISISTPPEKDVFFTEHEGVLRVRTRTENAEGTRRVIRIGIPRAQTLAWVKIIATGAHTTVRGVRAVWSLLLCNEGTLALTESTLKSCTLTHTRGELRFEAAVLKRASFCLNDVNARFTLLGSRADYRLICSPGERAWKIEGAEQRGAHYTEPARARRHMVISASASSIDVMFKAPPTQQEAVDTTQKG.

Residues 1–17 form the signal peptide; it reads MRMAFMLLALLFSFRNA.

This is an uncharacterized protein from Treponema pallidum (strain Nichols).